We begin with the raw amino-acid sequence, 340 residues long: Phenylalanine--tRNA ligase alpha subunit (340 aa).

A Mg(2+)-binding site is contributed by Glu-254.

Belongs to the class-II aminoacyl-tRNA synthetase family. Phe-tRNA synthetase alpha subunit type 1 subfamily. Tetramer of two alpha and two beta subunits. Requires Mg(2+) as cofactor.

It localises to the cytoplasm. It catalyses the reaction tRNA(Phe) + L-phenylalanine + ATP = L-phenylalanyl-tRNA(Phe) + AMP + diphosphate + H(+). This Chloroherpeton thalassium (strain ATCC 35110 / GB-78) protein is Phenylalanine--tRNA ligase alpha subunit.